The following is a 41-amino-acid chain: Pi-stichotoxin-Hcr5a (41 aa).

3 disulfides stabilise this stretch: Cys-4/Cys-37, Cys-6/Cys-30, and Cys-20/Cys-38.

This sequence belongs to the sea anemone type 3 (BDS) potassium channel toxin family.

Its subcellular location is the secreted. It localises to the nematocyst. Functionally, weakly inhibits human homomeric ASIC3 (IC(50)=5.5 uM). This chain is Pi-stichotoxin-Hcr5a, found in Radianthus crispa (Leathery sea anemone).